We begin with the raw amino-acid sequence, 426 residues long: Putative 3-oxoacyl-[acyl-carrier-protein] synthase, mitochondrial (426 aa).

The transit peptide at 1–18 (MKRVVITGLGAVTPLGNG) directs the protein to the mitochondrion. The region spanning 19–423 (VKTNWRNLIQ…GTNASLCFKK (405 aa)) is the Ketosynthase family 3 (KS3) domain. Active-site for beta-ketoacyl synthase activity residues include Cys170, His311, and His351.

It belongs to the thiolase-like superfamily. Beta-ketoacyl-ACP synthases family.

It localises to the mitochondrion. It catalyses the reaction a fatty acyl-[ACP] + malonyl-[ACP] + H(+) = a 3-oxoacyl-[ACP] + holo-[ACP] + CO2. It carries out the reaction butanoyl-[ACP] + malonyl-[ACP] + H(+) = 3-oxohexanoyl-[ACP] + holo-[ACP] + CO2. The catalysed reaction is hexanoyl-[ACP] + malonyl-[ACP] + H(+) = 3-oxooctanoyl-[ACP] + holo-[ACP] + CO2. The enzyme catalyses octanoyl-[ACP] + malonyl-[ACP] + H(+) = 3-oxodecanoyl-[ACP] + holo-[ACP] + CO2. It catalyses the reaction decanoyl-[ACP] + malonyl-[ACP] + H(+) = 3-oxododecanoyl-[ACP] + holo-[ACP] + CO2. It carries out the reaction dodecanoyl-[ACP] + malonyl-[ACP] + H(+) = 3-oxotetradecanoyl-[ACP] + holo-[ACP] + CO2. The catalysed reaction is tetradecanoyl-[ACP] + malonyl-[ACP] + H(+) = 3-oxohexadecanoyl-[ACP] + holo-[ACP] + CO2. The protein operates within lipid metabolism; fatty acid biosynthesis. In terms of biological role, may play a role in the biosynthesis of lipoic acid as well as longer chain fatty acids required for optimal mitochondrial function. In Schizosaccharomyces pombe (strain 972 / ATCC 24843) (Fission yeast), this protein is Putative 3-oxoacyl-[acyl-carrier-protein] synthase, mitochondrial.